Here is a 957-residue protein sequence, read N- to C-terminus: Glycine dehydrogenase (decarboxylating) (957 aa).

Lys708 bears the N6-(pyridoxal phosphate)lysine mark.

Belongs to the GcvP family. The glycine cleavage system is composed of four proteins: P, T, L and H. It depends on pyridoxal 5'-phosphate as a cofactor.

The enzyme catalyses N(6)-[(R)-lipoyl]-L-lysyl-[glycine-cleavage complex H protein] + glycine + H(+) = N(6)-[(R)-S(8)-aminomethyldihydrolipoyl]-L-lysyl-[glycine-cleavage complex H protein] + CO2. Functionally, the glycine cleavage system catalyzes the degradation of glycine. The P protein binds the alpha-amino group of glycine through its pyridoxal phosphate cofactor; CO(2) is released and the remaining methylamine moiety is then transferred to the lipoamide cofactor of the H protein. The chain is Glycine dehydrogenase (decarboxylating) from Cronobacter sakazakii (strain ATCC BAA-894) (Enterobacter sakazakii).